A 278-amino-acid chain; its full sequence is Shikimate dehydrogenase (NADP(+)) (278 aa).

Shikimate is bound by residues 23-25 (SRS) and Thr70. The active-site Proton acceptor is the Lys74. Glu86 provides a ligand contact to NADP(+). Asn95 and Asp110 together coordinate shikimate. NADP(+) is bound by residues 135 to 139 (GAGGA), 159 to 164 (NRTKEK), and Met224. Tyr226 provides a ligand contact to shikimate. Gly248 contributes to the NADP(+) binding site.

This sequence belongs to the shikimate dehydrogenase family. As to quaternary structure, homodimer.

It carries out the reaction shikimate + NADP(+) = 3-dehydroshikimate + NADPH + H(+). Its pathway is metabolic intermediate biosynthesis; chorismate biosynthesis; chorismate from D-erythrose 4-phosphate and phosphoenolpyruvate: step 4/7. In terms of biological role, involved in the biosynthesis of the chorismate, which leads to the biosynthesis of aromatic amino acids. Catalyzes the reversible NADPH linked reduction of 3-dehydroshikimate (DHSA) to yield shikimate (SA). The sequence is that of Shikimate dehydrogenase (NADP(+)) from Alcanivorax borkumensis (strain ATCC 700651 / DSM 11573 / NCIMB 13689 / SK2).